A 444-amino-acid chain; its full sequence is Alpha-N-acetylgalactosaminidase (444 aa).

NAD(+) is bound by residues 30–31 (LR), D52, N80, 101–104 (WEWH), H107, 121–122 (EV), and N150. Residue Y179 coordinates substrate. Residue 208-212 (SEAKW) participates in NAD(+) binding. Residues R213, 225 to 228 (YPTH), and Y307 each bind substrate. Y225 serves as a coordination point for NAD(+).

It belongs to the Gfo/Idh/MocA family. Glycosyl hydrolase 109 subfamily. NAD(+) is required as a cofactor.

The enzyme catalyses Cleavage of non-reducing alpha-(1-&gt;3)-N-acetylgalactosamine residues from human blood group A and AB mucin glycoproteins, Forssman hapten and blood group A lacto series glycolipids.. Glycosidase that has specific alpha-N-acetylgalactosaminidase activity. This chain is Alpha-N-acetylgalactosaminidase (nagA), found in Elizabethkingia meningoseptica (Chryseobacterium meningosepticum).